We begin with the raw amino-acid sequence, 188 residues long: Elongation factor P-like protein (188 aa).

The protein belongs to the elongation factor P family.

In Xanthomonas oryzae pv. oryzae (strain MAFF 311018), this protein is Elongation factor P-like protein.